The sequence spans 179 residues: Large ribosomal subunit protein uL5c (179 aa).

It belongs to the universal ribosomal protein uL5 family. Part of the 50S ribosomal subunit; contacts the 5S rRNA.

Its subcellular location is the plastid. It is found in the chloroplast. In terms of biological role, binds 5S rRNA, forms part of the central protuberance of the 50S subunit. The chain is Large ribosomal subunit protein uL5c (rpl5) from Gracilaria tenuistipitata var. liui (Red alga).